Consider the following 488-residue polypeptide: Inosine-5'-monophosphate dehydrogenase (488 aa).

CBS domains are found at residues 95 to 153 and 157 to 216; these read VISN…SIKI and MTQE…AKDE. NAD(+) is bound by residues D250 and 300 to 302; that span reads GIG. K(+) is bound by residues G302 and G304. IMP is bound at residue S305. Residue C307 coordinates K(+). The Thioimidate intermediate role is filled by C307. IMP is bound by residues 340 to 342, 363 to 364, and 387 to 391; these read DGG, GS, and YRGMG. R403 functions as the Proton acceptor in the catalytic mechanism. E417 is an IMP binding site. Residues 468-488 are disordered; sequence GLAESHPHNIQITKESPNYSF. Positions 471, 472, and 473 each coordinate K(+). Polar residues predominate over residues 475–488; it reads HNIQITKESPNYSF.

It belongs to the IMPDH/GMPR family. In terms of assembly, homotetramer. It depends on K(+) as a cofactor.

The enzyme catalyses IMP + NAD(+) + H2O = XMP + NADH + H(+). It participates in purine metabolism; XMP biosynthesis via de novo pathway; XMP from IMP: step 1/1. Mycophenolic acid (MPA) is a non-competitive inhibitor that prevents formation of the closed enzyme conformation by binding to the same site as the amobile flap. In contrast, mizoribine monophosphate (MZP) is a competitive inhibitor that induces the closed conformation. MPA is a potent inhibitor of mammalian IMPDHs but a poor inhibitor of the bacterial enzymes. MZP is a more potent inhibitor of bacterial IMPDH. Catalyzes the conversion of inosine 5'-phosphate (IMP) to xanthosine 5'-phosphate (XMP), the first committed and rate-limiting step in the de novo synthesis of guanine nucleotides, and therefore plays an important role in the regulation of cell growth. The protein is Inosine-5'-monophosphate dehydrogenase of Staphylococcus aureus (strain Mu50 / ATCC 700699).